The sequence spans 311 residues: Olfactory receptor 8G1 (311 aa).

At methionine 1–leucine 25 the chain is on the extracellular side. Residues asparagine 5 and asparagine 6 are each glycosylated (N-linked (GlcNAc...) asparagine). Residues proline 26–threonine 46 traverse the membrane as a helical segment. The Cytoplasmic portion of the chain corresponds to threonine 47–histidine 54. A helical membrane pass occupies residues leucine 55–threonine 75. Residues valine 76–threonine 99 lie on the Extracellular side of the membrane. A disulfide bridge links cysteine 97 with cysteine 189. The helical transmembrane segment at glutamine 100 to tyrosine 120 threads the bilayer. Topologically, residues aspartate 121–lysine 139 are cytoplasmic. A helical membrane pass occupies residues alanine 140–threonine 160. Over glycine 161–leucine 197 the chain is Extracellular. The helical transmembrane segment at leucine 198–serine 217 threads the bilayer. At tyrosine 218–alanine 237 the chain is on the cytoplasmic side. The helical transmembrane segment at phenylalanine 238–methionine 258 threads the bilayer. The Extracellular segment spans residues tyrosine 259–glycine 271. A helical transmembrane segment spans residues lysine 272–leucine 292. Residues arginine 293–leucine 311 lie on the Cytoplasmic side of the membrane.

Belongs to the G-protein coupled receptor 1 family.

Its subcellular location is the cell membrane. Its function is as follows. Odorant receptor. The polypeptide is Olfactory receptor 8G1 (OR8G1) (Homo sapiens (Human)).